A 242-amino-acid chain; its full sequence is tRNA (guanine-N(1)-)-methyltransferase (242 aa).

S-adenosyl-L-methionine-binding positions include G113 and 133 to 138 (IGDYVL).

This sequence belongs to the RNA methyltransferase TrmD family. As to quaternary structure, homodimer.

The protein resides in the cytoplasm. It catalyses the reaction guanosine(37) in tRNA + S-adenosyl-L-methionine = N(1)-methylguanosine(37) in tRNA + S-adenosyl-L-homocysteine + H(+). Functionally, specifically methylates guanosine-37 in various tRNAs. The chain is tRNA (guanine-N(1)-)-methyltransferase from Shewanella sediminis (strain HAW-EB3).